Here is a 174-residue protein sequence, read N- to C-terminus: 3-hydroxyanthranilate 3,4-dioxygenase (174 aa).

An O2-binding site is contributed by Arg-47. Positions 51, 57, and 95 each coordinate Fe cation. Residue Glu-57 coordinates substrate. Arg-99 and Glu-110 together coordinate substrate. Fe cation contacts are provided by Cys-125, Cys-128, Cys-162, and Cys-165.

Belongs to the 3-HAO family. In terms of assembly, homodimer. It depends on Fe(2+) as a cofactor.

The catalysed reaction is 3-hydroxyanthranilate + O2 = (2Z,4Z)-2-amino-3-carboxymuconate 6-semialdehyde. It participates in cofactor biosynthesis; NAD(+) biosynthesis; quinolinate from L-kynurenine: step 3/3. With respect to regulation, inhibited by 4-chloro-3-hydroxyanthranilate. Mechanism of inactivation involves the oxidation of the catalytic active site Fe(2+) to the catalytically inactive Fe(3+) oxidation state, superoxide production, and formation of two disulfide bonds between Cys-125 and Cys-128, and Cys-162 and Cys-165. Enzyme can be reactivated under reducing conditions. Its function is as follows. Catalyzes the oxidative ring opening of 3-hydroxyanthranilate to 2-amino-3-carboxymuconate semialdehyde, which spontaneously cyclizes to quinolinate. The chain is 3-hydroxyanthranilate 3,4-dioxygenase from Cupriavidus metallidurans (strain ATCC 43123 / DSM 2839 / NBRC 102507 / CH34) (Ralstonia metallidurans).